We begin with the raw amino-acid sequence, 585 residues long: MKPHTVSLVLSNLASLAAATCKCTPGHACWPSLEEWSRFNSSIGGQLIQSSPVAEACYSGPKDNAACQNIEKSWTDDVFQVSQPIGYAWPLNLSCPLPTPGLDTKCSIGNSPVYVVNVTCEEDITRGIKFAQEKNLRLVVKSTGHDSQQRSTGYGSLSIWLHNFRKGFRFQGHNPVLATCPKSGWKGSTLTINGGYSWRDIYPAAQKQGLIVIGGLDRGPCSTGGWTQGGGHSPGTHYFGIGADQVLSARVVLASGKIVVASPCENEDLFFAIRGGGGGTFGVVTEITVKTYPTKALSTINLIVGSKGDETVPKFLDAVATIYSLLPGLSKKGFAGYGNWVVRALSPITAKNYTNLYGQSWTLLGATQQEAENLFQPFKEEIVKHQSENGLEVTVSSGTFRDYFSYYYSMGNGTDSAVGGVSALASRLLDTEALQGNRKDLRKFLDSITQGSAVYHTLIHHGLEAAADVKADPTSAVLPGWYKSILLDEFEIPMNTTDVDAYAGSFEYLRNELVPLYESLSPDTGTYMNEADWGNMNWKKDFFGSHWDRLLKVKTRYDPEGFFYCPKCVGSDDWVENKGGSLCRA.

The first 19 residues, 1–19 (MKPHTVSLVLSNLASLAAA), serve as a signal peptide directing secretion. N-linked (GlcNAc...) asparagine glycans are attached at residues asparagine 40, asparagine 92, and asparagine 117. An FAD-binding PCMH-type domain is found at 108–294 (IGNSPVYVVN…TEITVKTYPT (187 aa)). At histidine 145 the chain carries Pros-8alpha-FAD histidine. N-linked (GlcNAc...) asparagine glycans are attached at residues asparagine 352, asparagine 412, and asparagine 495.

It belongs to the oxygen-dependent FAD-linked oxidoreductase family. FAD serves as cofactor.

The protein operates within secondary metabolite biosynthesis. FAD-linked oxidoreductase; part of the gene cluster that mediates the biosynthesis of the cyclic tetrapeptide apicidin F (APF). The non-ribosomal peptide synthetase apf1 incorporates four different amino acids to produce apicidin F: L-phenylalanine, D-pipecolic acid (D-pip), N-methoxy-L-tryptophan and L-2-aminooctanedioic acid. L-Phenylalanine is the only proteinogenic amino acid directly used by apf1. The 3 other apf1 substrates are non-proteinogenic and have to be modified by other enzymes of the cluster. Lysine is converted to delta-1-pyrroline-5-carboxylate (P5C) which is reduced to L-pipecolic acid (L-pip) by apf3. L-pip is epimerized to D-pip, probably by apf1 activity, prior to incorporation. L-Tryptophan is N-oxidyzed by one of the cytochrome P450 monooxygenases (apf7 or apf8), and further methylated at the hydroxy group by the O-methyltransferase apf6 to yield N-methoxy-L-tryptophan. The synthesis of the fourth apf1 substrate is more complex. The fatty acid synthase apf5 is involved in the synthesis of the octanoic acid backbone of L-2-aminooctanedioic acid by fixing one acetyl-CoA unit and three malonyl-CoA units. Then one of the cytochrome P450 monooxygenases (apf7 or apf8) may oxidize this backbone to 2-oxooctanoic acid. The aminotransferase apf4 is predicted to catalyze the exchange of the keto group with an amino group. The next step would be the oxidation of 2-aminooctanoic acid by one of the cytochrome P450 monooxygenases (apf7 or apf8). The last step is the oxidation of 2-amino-8-hydroxyoctanoic acid to 2-aminooctanedioic acid is catalyzed by the FAD-dependent monooxygenase apf9. The sequence is that of FAD-linked oxidoreductase apf9 from Gibberella fujikuroi (strain CBS 195.34 / IMI 58289 / NRRL A-6831) (Bakanae and foot rot disease fungus).